Consider the following 309-residue polypeptide: Porphobilinogen deaminase (309 aa).

An S-(dipyrrolylmethanemethyl)cysteine modification is found at C242.

The protein belongs to the HMBS family. Monomer. Requires dipyrromethane as cofactor.

The catalysed reaction is 4 porphobilinogen + H2O = hydroxymethylbilane + 4 NH4(+). Its pathway is porphyrin-containing compound metabolism; protoporphyrin-IX biosynthesis; coproporphyrinogen-III from 5-aminolevulinate: step 2/4. Functionally, tetrapolymerization of the monopyrrole PBG into the hydroxymethylbilane pre-uroporphyrinogen in several discrete steps. This chain is Porphobilinogen deaminase, found in Shewanella frigidimarina (strain NCIMB 400).